The following is a 1671-amino-acid chain: DENN domain-containing protein Crag (1671 aa).

The MABP domain maps to I39–M195. The uDENN domain occupies V187 to I364. The region spanning P385 to T521 is the cDENN domain. A dDENN domain is found at L523 to H632. Disordered stretches follow at residues Q997–S1160, A1245–E1311, and V1415–N1435. Composition is skewed to acidic residues over residues G1011–Y1023 and Y1050–D1061. Residues R1072–D1089 show a composition bias toward polar residues. Residues A1100 to Q1119 show a composition bias toward low complexity. Over residues R1136–G1147 the composition is skewed to polar residues. A compositionally biased stretch (basic residues) spans N1254 to Q1277. Positions A1281–S1301 are enriched in basic and acidic residues.

As to quaternary structure, interacts with Cam. Interacts with Rab10. Interacts (via the DENN domains) with Rab11. As to expression, expressed in the adult head and body.

It is found in the cytoplasm. The protein resides in the cell cortex. It localises to the early endosome. Its subcellular location is the recycling endosome. The protein localises to the cytoplasmic granule. In terms of biological role, calmodulin-binding protein that acts as a guanine exchange factor for Rab10 and Rab11. Essential for maintenance of adult photoreceptor cells. Upon light stimulation, required for trafficking of newly synthesized ninaE (Rh1) from the trans-Golgi network to rhabdomere membranes via Rab11-dependent vesicular transport. During egg development, essential for establishing and maintaining epithelial cell polarity by regulating the correct polarized deposition of basal membrane (BM) proteins in follicular epithelial (FE) cells. Functions by targeting Rab10 to the basal cytoplasm, where it restricts the secretion of BM proteins such as trol/Pcan and vkg/Coll IV to the basal surface. Appears to be involved in regulating the levels and distribution of the guanine nucleotide exchange factor strat, however the two proteins appear to have independent roles in regulating polarized BM protein secretion in the FE. This Drosophila melanogaster (Fruit fly) protein is DENN domain-containing protein Crag.